A 499-amino-acid polypeptide reads, in one-letter code: MSSTSLYAAIDLGSNSFHMLVVREVAGSIQTLSRIKRKVRLAAGLNSDNTLSAEAMERGWQCLRLFAERLQDIPPTQIRVVATATLRLAVNAGEFLAKAQEILGTPVQVISGEEEARLIYQGVAHTTGGADQRLVVDIGGASTELVTGTGAQTTSLFSLSMGCVTWLERYFADRSLTKENFDLAEAAAREVLLPVADVLRYHGWKVCVGASGTVQALQEIMMAQGMDERITLAKLQQLKQRAIQCGRLEELEIEGLTLERALVFPSGLAILIAIFSELNIQCMTLAGGALREGLVYGMLHLSVEQDIRSRTLRNIQRRFMIDTEQAQRVGGLASHLLSQLDGSWELDPLSRDLLLSACALHEIGLSVDFKRAPQHAAYLVNNLDLPGFTPAQKKLIATLLLNQTNAIDLSSLHQQNAVPPRVAEHLCRLLRLAILFASRRRDDLLPAIQLTAQDEQLTLILPGNWLDEHPLGREMVDQECQWQSYVHWILRVASGDTLK.

Belongs to the GppA/Ppx family. GppA subfamily.

It carries out the reaction guanosine 3'-diphosphate 5'-triphosphate + H2O = guanosine 3',5'-bis(diphosphate) + phosphate + H(+). Its pathway is purine metabolism; ppGpp biosynthesis; ppGpp from GTP: step 2/2. Functionally, catalyzes the conversion of pppGpp to ppGpp. Guanosine pentaphosphate (pppGpp) is a cytoplasmic signaling molecule which together with ppGpp controls the 'stringent response', an adaptive process that allows bacteria to respond to amino acid starvation, resulting in the coordinated regulation of numerous cellular activities. The chain is Guanosine-5'-triphosphate,3'-diphosphate pyrophosphatase from Klebsiella pneumoniae subsp. pneumoniae (strain ATCC 700721 / MGH 78578).